We begin with the raw amino-acid sequence, 356 residues long: Photosystem II protein D1 (356 aa).

The next 3 helical transmembrane spans lie at Tyr-29 to Thr-46, His-118 to Leu-133, and Trp-142 to Ala-156. His-118 is a chlorophyll a binding site. Position 126 (Tyr-126) interacts with pheophytin a. Positions 170 and 189 each coordinate [CaMn4O5] cluster. A helical transmembrane segment spans residues Phe-197 to Leu-218. His-198 contacts chlorophyll a. A quinone is bound by residues His-215 and Ser-264 to Phe-265. His-215 is a binding site for Fe cation. Position 272 (His-272) interacts with Fe cation. A helical transmembrane segment spans residues Phe-274–Met-288. Residues His-332, Glu-333, Asp-342, and Ala-344 each contribute to the [CaMn4O5] cluster site. A propeptide spanning residues Ser-345–Gly-356 is cleaved from the precursor.

It belongs to the reaction center PufL/M/PsbA/D family. In terms of assembly, PSII is composed of 1 copy each of membrane proteins PsbA, PsbB, PsbC, PsbD, PsbE, PsbF, PsbH, PsbI, PsbJ, PsbK, PsbL, PsbM, PsbT, PsbX, PsbY, PsbZ, Psb30/Ycf12, peripheral proteins PsbO, CyanoQ (PsbQ), PsbU, PsbV and a large number of cofactors. It forms dimeric complexes. It depends on The D1/D2 heterodimer binds P680, chlorophylls that are the primary electron donor of PSII, and subsequent electron acceptors. It shares a non-heme iron and each subunit binds pheophytin, quinone, additional chlorophylls, carotenoids and lipids. D1 provides most of the ligands for the Mn4-Ca-O5 cluster of the oxygen-evolving complex (OEC). There is also a Cl(-1) ion associated with D1 and D2, which is required for oxygen evolution. The PSII complex binds additional chlorophylls, carotenoids and specific lipids. as a cofactor. Tyr-161 forms a radical intermediate that is referred to as redox-active TyrZ, YZ or Y-Z. Post-translationally, C-terminally processed by CtpA; processing is essential to allow assembly of the oxygen-evolving complex and thus photosynthetic growth.

The protein localises to the cellular thylakoid membrane. It catalyses the reaction 2 a plastoquinone + 4 hnu + 2 H2O = 2 a plastoquinol + O2. Its function is as follows. Photosystem II (PSII) is a light-driven water:plastoquinone oxidoreductase that uses light energy to abstract electrons from H(2)O, generating O(2) and a proton gradient subsequently used for ATP formation. It consists of a core antenna complex that captures photons, and an electron transfer chain that converts photonic excitation into a charge separation. The D1/D2 (PsbA/PsbD) reaction center heterodimer binds P680, the primary electron donor of PSII as well as several subsequent electron acceptors. In Crocosphaera subtropica (strain ATCC 51142 / BH68) (Cyanothece sp. (strain ATCC 51142)), this protein is Photosystem II protein D1.